Here is an 860-residue protein sequence, read N- to C-terminus: Ribosome-releasing factor 2, mitochondrial (860 aa).

A tr-type G domain is found at aspartate 45 to leucine 337. Residues alanine 54–threonine 61, aspartate 118–histidine 122, and asparagine 172–aspartate 175 each bind GTP.

It belongs to the TRAFAC class translation factor GTPase superfamily. Classic translation factor GTPase family. EF-G/EF-2 subfamily.

The protein resides in the mitochondrion. Its function is as follows. Mitochondrial GTPase that mediates the disassembly of ribosomes from messenger RNA at the termination of mitochondrial protein biosynthesis. Not involved in the GTP-dependent ribosomal translocation step during translation elongation. The protein is Ribosome-releasing factor 2, mitochondrial of Debaryomyces hansenii (strain ATCC 36239 / CBS 767 / BCRC 21394 / JCM 1990 / NBRC 0083 / IGC 2968) (Yeast).